We begin with the raw amino-acid sequence, 682 residues long: Epithelial sodium channel subunit alpha (682 aa).

Residues 1–111 are Cytoplasmic-facing; sequence MLMRLLPLPS…CSKHNRMKTA (111 aa). Positions 34-69 are disordered; that stretch reads AQGPLPPQPLQGPLKGDKCEQPGLGPEPTAPQQHTE. Residues 112-132 traverse the membrane as a helical segment; sequence FWAVLWLCTFGMMYWQFALLF. At 133 to 586 the chain is on the extracellular side; the sequence is GEYFSYPVSL…SQWSLWFGSS (454 aa). Cystine bridges form between Cys-159/Cys-329, Cys-253/Cys-260, Cys-306/Cys-313, Cys-418/Cys-503, Cys-440/Cys-480, Cys-440/Cys-499, Cys-444/Cys-495, Cys-453/Cys-480, Cys-453/Cys-503, and Cys-455/Cys-469. Residue Asn-191 is glycosylated (N-linked (GlcNAc...) asparagine). Residues 201–267 form a gating release of inhibition by proteolysis (GRIP); protease-sensitive region that is responsible for the proteolytic activation of the channel region; the sequence is RSRRSLADTL…SDCFYQTSSS (67 aa). The tract at residues 221–240 is disordered; sequence PEPRRARSSDPSSVRDNNPR. The N-linked (GlcNAc...) asparagine glycan is linked to Asn-504. A helical transmembrane segment spans residues 587 to 607; it reads VLSVVEMAEFMFDLLVITLLM. Residues 608–682 lie on the Cytoplasmic side of the membrane; that stretch reads LLRRFRSRYW…SSAACAPREP (75 aa). A PY motif; recruits WW domain-containing proteins and is thereby required for ubiquitination and inhibition of the channel by NEDD4 and NEDD4L motif is present at residues 653 to 657; that stretch reads PPPAY.

This sequence belongs to the amiloride-sensitive sodium channel (TC 1.A.6) family. SCNN1A subfamily. As to quaternary structure, heterotrimer; containing an alpha/SCNN1A, a beta/SCNN1B and a gamma/SCNN1G subunit. Interacts with WWP1 (via WW domains). Interacts with WWP2 (via WW domains); inhibits the channel. Interacts with BPIFA1; the interaction is indirect via SCNN1B and inhibits the proteolytic processing of SCNN1A and SCNN1G and the activation of ENaC. Interacts with the full-length immature form of PCSK9 (pro-PCSK9). Post-translationally, ubiquitinated. Can be ubiquitinated at multiple sites and undergo monoubiquitination and polyubiquitination. Ubiquitination by NEDD4 or NEDD4L inhibits the ENaC channel through endocytosis, intracellular retention and degradation of its individual subunits. In terms of processing, N-glycosylated. ENaC is activated through the proteolytic maturation of its subunits. Furin cleaves the SCNN1A subunit, which results in a stepwise increase in the open probability of the channel due to the release of an inhibitory tract. BPIFA1, which is recruited by the SCNN1B subunit, prevents the proteolytic activation of ENaC.

Its subcellular location is the apical cell membrane. The protein resides in the cell projection. It is found in the cilium. It localises to the cytoplasmic granule. The protein localises to the cytoplasm. Its subcellular location is the cytoplasmic vesicle. The protein resides in the secretory vesicle. It is found in the acrosome. It localises to the flagellum. It carries out the reaction Na(+)(in) = Na(+)(out). With respect to regulation, originally identified and characterized by its inhibition by the diuretic drug amiloride. In terms of biological role, this is one of the three pore-forming subunits of the heterotrimeric epithelial sodium channel (ENaC), a critical regulator of sodium balance and fluid homeostasis. ENaC operates in epithelial tissues, where it mediates the electrodiffusion of sodium ions from extracellular fluid through the apical membrane of cells, with water following osmotically. It plays a key role in maintaining sodium homeostasis through electrogenic sodium reabsorption in the kidneys. Additionally, ENaC is essential for airway surface liquid homeostasis, which is crucial for proper mucus clearance. The protein is Epithelial sodium channel subunit alpha of Cavia porcellus (Guinea pig).